We begin with the raw amino-acid sequence, 1186 residues long: Chromosome partition protein Smc (1186 aa).

Residue 32–39 participates in ATP binding; sequence PNGSGKSN. Coiled coils occupy residues 167-206 and 259-481; these read VLKY…EPLK and SSAI…QAYQ. Positions 519–637 constitute an SMC hinge domain; sequence GIRGAVLELI…EDLKGANELA (119 aa). 3 coiled-coil regions span residues 672-864, 893-943, and 990-1029; these read LLGR…MSSS, RDQR…NLLQ, and SIDE…DEEM.

The protein belongs to the SMC family. Homodimer.

Its subcellular location is the cytoplasm. Functionally, required for chromosome condensation and partitioning. The polypeptide is Chromosome partition protein Smc (Bacillus subtilis (strain 168)).